The sequence spans 366 residues: A-type ATP synthase subunit C (366 aa).

The protein belongs to the V-ATPase V0D/AC39 subunit family. Has multiple subunits with at least A(3), B(3), C, D, E, F, H, I and proteolipid K(x).

The protein localises to the cell membrane. In terms of biological role, component of the A-type ATP synthase that produces ATP from ADP in the presence of a proton gradient across the membrane. The chain is A-type ATP synthase subunit C from Thermococcus gammatolerans (strain DSM 15229 / JCM 11827 / EJ3).